A 156-amino-acid polypeptide reads, in one-letter code: Ribosomal RNA large subunit methyltransferase H (156 aa).

S-adenosyl-L-methionine-binding positions include Leu-72, Gly-104, and 123 to 128; that span reads LGKMVW.

Belongs to the RNA methyltransferase RlmH family. In terms of assembly, homodimer.

Its subcellular location is the cytoplasm. The enzyme catalyses pseudouridine(1915) in 23S rRNA + S-adenosyl-L-methionine = N(3)-methylpseudouridine(1915) in 23S rRNA + S-adenosyl-L-homocysteine + H(+). Functionally, specifically methylates the pseudouridine at position 1915 (m3Psi1915) in 23S rRNA. The polypeptide is Ribosomal RNA large subunit methyltransferase H (Roseobacter denitrificans (strain ATCC 33942 / OCh 114) (Erythrobacter sp. (strain OCh 114))).